Here is a 762-residue protein sequence, read N- to C-terminus: Chondroadherin-like protein (762 aa).

The signal sequence occupies residues 1–30 (MEGPRSSTHVPLVLPLLVLLLLAPARQAAA). One can recognise an LRRNT 1 domain in the interval 31–62 (QRCPQACICDNSRRHVACRYQNLTEVPDAIPE). N-linked (GlcNAc...) asparagine glycosylation occurs at asparagine 52. LRR repeat units lie at residues 87–108 (HLTH…AFRG), 111–132 (RLLL…ALDG), 135–156 (SLRR…TFGA), 159–180 (ALAT…AFQG), 183–204 (RVRW…ALAG), 207–228 (ALRR…VLSQ), 231–252 (GLAR…DGLA), 255–276 (GLRE…AFAH), and 279–300 (RLHT…QGPG). The LRRCT 1 domain occupies 310 to 359 (NPLWCGCQARPLLEWLARARVRSDGACQGPRRLRGEALDALRPWDLRCPG). The tract at residues 364 to 390 (EEEELEERAVAGPRAPPRGPPRGPGEE) is disordered. Residues 377–386 (RAPPRGPPRG) are compositionally biased toward pro residues. Positions 387–425 (PGEERAVAPCPRACVCVPESRHSSCEGCGLQAVPRGFPS) constitute an LRRNT 2 domain. A disulfide bridge connects residues cysteine 396 and cysteine 411. LRR repeat units lie at residues 426 to 447 (DTQL…AFPG), 450 to 471 (HLVS…ALAG), 474 to 495 (RLIY…ALEG), 498 to 519 (RLGY…ALRA), 522 to 543 (SLFS…DLGR), 546 to 566 (ALRW…GALG), 570 to 591 (ELEK…ALEG), 594 to 615 (ALLE…AFQP), 619 to 640 (SLQH…AFSG), and 644 to 665 (GLQS…PSLS). Asparagine 626 carries N-linked (GlcNAc...) asparagine glycosylation. Residues 675–724 (NPFHCDCQLLPLHRWLTGLNLRVGATCATPPNARGQRVKAAAAVFEDCPG) enclose the LRRCT 2 domain. Intrachain disulfides connect cysteine 679/cysteine 722 and cysteine 681/cysteine 701. Positions 728 to 745 (RKAKRTPASRPSARRTPI) are enriched in basic residues. A disordered region spans residues 728–762 (RKAKRTPASRPSARRTPIKGRQCGADKVGKEKGRL).

This sequence belongs to the small leucine-rich proteoglycan (SLRP) family. SLRP class IV subfamily. As to quaternary structure, associates with collagen and binds to collagen fibrils.

The protein resides in the secreted. The protein localises to the extracellular space. It localises to the extracellular matrix. In terms of biological role, potential negative modulator of chondrocyte differentiation. Inhibits collagen fibrillogenesis in vitro. May influence chondrocyte's differentiation by acting on its cellular collagenous microenvironment. The protein is Chondroadherin-like protein (CHADL) of Homo sapiens (Human).